Reading from the N-terminus, the 1189-residue chain is MAEEDYLPVYQLRRDSSLLGTMNKILVANRGEIPIRIFRTAHELSMNTVAIYSHEDRLSMHRLKADEAYVIGERGQYSPVQAYLAIDEIIKIAVKHNVNMIHPGYGFCSENSEFARKVEENGILWVGPSDTVIDAVGDKVSARNLAYAANVPTVPGTPGPIEDVAQATAFVEEYGYPVIIKAAFGGGGRGMRVVREGDDIEDAFLRASSEAKTAFGNGTVFIERFLDKPKHIEVQLLADNYGNVIHLFERDCSVQRRHQKVARNCSAKTLPVEVRNAILNDAVKLAKTANYRNAGTAEFLVDSQNRHYFIEINPRIQVEHTITEEITGVDIVAAQIQIAAGASLEQLGLLQEKITTRGFAIQCRITTEDPTKNFQPDTGKIEVYRSSGGNGVRLDGGNGFAGAVISPHYDSMLVKCSTSGSNYEIRRRKMIRALVEFRIRGVKTNIPFLLALLTHPVFMTSECWTTFIDDTPELFKILTSQNRAQKLLAYLGDLAVNGSSIKGQIGLPKLHKEADIPSITDINGDVIDVSIPPPDGWRQFLLEKGPEQFAQQVRAFPGLMIMDTTWRDAHQSLLATRVRTHDLLNIAPATSYALHHAFALECWGGATFDVSMRFLHEDPWQRLRKLRKAVPNIPFSMLLRGGNGVAYYSLPDNAIDHFLKQAKDTGVDVFRVFDALNDIEQLKVGVDAVKKAGGVVEATMCYSGDMLKPGKKYNLEYYINLATEIVEMGTHILAVKDMAGTLKPTAAKQLISALRRKFPSLPIHVHTHDSAGTGVASMVACARAGADVVTVRVNSMSGMTSQPSMSAFIASLDGEIETGIPEANAREIDAYWAEMRLLYSCFEADLKGPDPEVYQHEIPGGQLTNLLFQAQQVGLGEKWVETKKAYEAANRLLGDIVKVTPTSKVVGDLAQFMVSNKLSSEDVERLASELDFPDSVLDFFEGLMGTPYGGFPEPLRTNVISGKRRKLTSRPGLTLEPYNIPAIREDLEARFSKVTENDVASYNMYPKVYEAYKKQQELYGDLSVLPTRNFLSPPKIDEERHVTIVTIETRKTLIIKCMAEGELSQSSGTREVYFELNGEMRKVTVEDKNGAVETITRPKADAHNPNEIGAPMAGVVVEVRVHENGEVKKGDPIAVLSAMKMEMVISSPVAGRIGQIAVKENDSVDASDLIPKSSRLSKLLMFIILIILY.

The Biotin carboxylation domain maps to 21-473 (TMNKILVANR…WTTFIDDTPE (453 aa)). ATP contacts are provided by lysine 139, glutamate 223, and histidine 258. Positions 143–340 (RNLAYAANVP…IVAAQIQIAA (198 aa)) constitute an ATP-grasp domain. The active site involves arginine 315. In terms of domain architecture, Pyruvate carboxyltransferase spans 559–826 (LMIMDTTWRD…ETGIPEANAR (268 aa)). Substrate contacts are provided by residues 567 to 571 (RDAHQ) and arginine 640. Position 568 (aspartate 568) interacts with a divalent metal cation. Residues lysine 736, histidine 766, and histidine 768 each contribute to the a divalent metal cation site. Position 736 is an N6-carboxylysine (lysine 736). Threonine 900 is a binding site for substrate. The region spanning 1099–1174 (KADAHNPNEI…DASDLIPKSS (76 aa)) is the Biotinyl-binding domain. The residue at position 1140 (lysine 1140) is an N6-biotinyllysine.

Biotin serves as cofactor. Requires Zn(2+) as cofactor.

Its subcellular location is the cytoplasm. It catalyses the reaction hydrogencarbonate + pyruvate + ATP = oxaloacetate + ADP + phosphate + H(+). It functions in the pathway carbohydrate biosynthesis; gluconeogenesis. Functionally, pyruvate carboxylase catalyzes a 2-step reaction, involving the ATP-dependent carboxylation of the covalently attached biotin in the first step and the transfer of the carboxyl group to pyruvate in the second. The protein is Pyruvate carboxylase (PYC1) of Komagataella pastoris (Yeast).